Here is a 357-residue protein sequence, read N- to C-terminus: Prostaglandin D2 receptor-like (357 aa).

The Extracellular portion of the chain corresponds to 1-20 (MNESYRCQAATWVERGSSAT). N-linked (GlcNAc...) asparagine glycosylation occurs at asparagine 2. The chain crosses the membrane as a helical span at residues 21 to 41 (MGGVLFSAGLLGNLLALVLLA). The Cytoplasmic portion of the chain corresponds to 42–57 (RSGLGSCRPGPLHPPP). Residues 58–78 (SVFYVLVCGLTVTHLLGKCLI) form a helical membrane-spanning segment. Over 79 to 106 (SPMVLAAYAQNRSLKELLPASGNQLCEA) the chain is Extracellular. An N-linked (GlcNAc...) asparagine glycan is attached at asparagine 89. A disulfide bridge links cysteine 104 with cysteine 182. Residues 107–127 (FAFLMSFFGLASTLQLLAMAL) form a helical membrane-spanning segment. Residues 128–149 (ECWLSLGHPFFYQRHITARRGV) lie on the Cytoplasmic side of the membrane. The chain crosses the membrane as a helical span at residues 150–170 (LVAPVAGAFSLAFCALPFAGF). Residues 171–194 (GKFVQYCPGTWCFIQMIHKKRSFS) are Extracellular-facing. A helical transmembrane segment spans residues 195–215 (VIGFSVLYSSLMALLVLATVV). Residues 216-261 (CNLGAMSNLYAMHRRQRHHPRRCSRDRAQSGSDYRHGSPNPLEELD) lie on the Cytoplasmic side of the membrane. A helical transmembrane segment spans residues 262 to 282 (HFVLLALTTVLFTMCSLPLIY). At 283 to 306 (RAYYGAFKLVDRADGDSEDLQALR) the chain is on the extracellular side. A helical membrane pass occupies residues 307 to 327 (FLSVISIVDPWIFIIFRTSVF). At 328 to 357 (RMLFHKAFTRPLIYRNWCSHSWQTNMESTL) the chain is on the cytoplasmic side.

The protein belongs to the G-protein coupled receptor 1 family. Strongly expressed in eye and gastrointestinal tract (GIT), moderately in the brain and oviduct and weakly in the epididymis. In the eye, expressed in the epithelium of the iris and ciliary body and in photoreceptor cells of the retina. In the brain, expressed in leptomeninges, choroid plexus and spinal cord (sensory and motor neurons of the dorsal and ventral horns). In the stomach, expressed in the mucous-secreting goblet cells and the columnar epithelium. Expressed in platelets.

The protein localises to the cell membrane. Its function is as follows. Receptor for prostaglandin D2 (PGD2). The activity of this receptor is mainly mediated by G(s) proteins that stimulate adenylate cyclase, resulting in an elevation of intracellular cAMP. A mobilization of calcium is also observed, but without formation of inositol 1,4,5-trisphosphate. The sequence is that of Prostaglandin D2 receptor-like (Ptgdrl) from Rattus norvegicus (Rat).